A 331-amino-acid polypeptide reads, in one-letter code: Fe-S cluster assembly protein DRE2 (331 aa).

Residues 1-146 (MSEILLLLHP…MPTFKKPVSS (146 aa)) are N-terminal SAM-like domain. The disordered stretch occupies residues 142–164 (KPVSSPVTLTDTSANNTDAEDDL). Polar residues predominate over residues 146–158 (SPVTLTDTSANNT). Positions 147–202 (PVTLTDTSANNTDAEDDLSMKRKLDSTKLAYFSDDSSGEEDDLIDENELIADSHKF) are linker. Residues Cys212, Cys224, Cys227, and Cys229 each coordinate [2Fe-2S] cluster. The segment at 212–229 (CELPNGKKRKKACKDCTC) is fe-S binding site A. Residues Cys294, Cys297, Cys305, and Cys308 each coordinate [4Fe-4S] cluster. Short sequence motifs (cx2C motif) lie at residues 294–297 (CSSC) and 305–308 (CDGC). A fe-S binding site B region spans residues 294-308 (CSSCALGDAFRCDGC).

Belongs to the anamorsin family. Monomer. Interacts with TAH18. Interacts with MIA40. [2Fe-2S] cluster serves as cofactor. It depends on [4Fe-4S] cluster as a cofactor.

The protein localises to the cytoplasm. It is found in the mitochondrion intermembrane space. Functionally, component of the cytosolic iron-sulfur (Fe-S) protein assembly (CIA) machinery required for the maturation of extramitochondrial Fe-S proteins. Part of an electron transfer chain functioning in an early step of cytosolic Fe-S biogenesis, facilitating the de novo assembly of a [4Fe-4S] cluster on the scaffold complex CFD1-NBP35. Electrons are transferred to DRE2 from NADPH via the FAD- and FMN-containing protein TAH18. TAH18-DRE2 are also required for the assembly of the diferric tyrosyl radical cofactor of ribonucleotide reductase (RNR), probably by providing electrons for reduction during radical cofactor maturation in the catalytic small subunit RNR2. The sequence is that of Fe-S cluster assembly protein DRE2 from Clavispora lusitaniae (strain ATCC 42720) (Yeast).